Consider the following 434-residue polypeptide: Eukaryotic translation initiation factor 3 subunit E-1 (434 aa).

The region spanning 219-392 (FFNHPKGRDL…GHVVMGTQPL (174 aa)) is the PCI domain.

Belongs to the eIF-3 subunit E family. As to quaternary structure, component of the eukaryotic translation initiation factor 3 (eIF-3) complex. The eIF-3 complex interacts with pix. Interacts with mxt.

Its subcellular location is the cytoplasm. In terms of biological role, component of the eukaryotic translation initiation factor 3 (eIF-3) complex, which is involved in protein synthesis of a specialized repertoire of mRNAs and, together with other initiation factors, stimulates binding of mRNA and methionyl-tRNAi to the 40S ribosome. The eIF-3 complex specifically targets and initiates translation of a subset of mRNAs involved in cell proliferation. In Drosophila willistoni (Fruit fly), this protein is Eukaryotic translation initiation factor 3 subunit E-1 (eIF3-S6-1).